We begin with the raw amino-acid sequence, 322 residues long: MAVVKEVLEIAEKIKNMEIRGAGKIARSAAYALQLQAEKSKATNVDEFWKEMKQAAKILFETRPTAVSLPNALRYVMHRGKIAYSSGADLEQLRFVIINAAKEFIHNSEKALERIGEFGAKRIEDGDVIMTHCHSKAAISVMKTAWEQGKDIKVIVTETRPKWQGKITAKELASYGIPVIYVVDSAARHYMKMTDKVVMGADSITVNGAVINKIGTALIALTAKEHRVWTMIAAETYKFHPETMLGQLVEIEMRDPTEVIPEDELKTWPKNIEVWNPAFDVTPPEYVDVIITERGIIPPYAAIDILREEFGWALKYTEPWED.

Substrate is bound by residues 20–23 (RGAG) and Arg63. Residue Cys133 is the Proton acceptor of the active site. 135-137 (SKA) is a substrate binding site. Asp202 acts as the Proton donor in catalysis. Substrate-binding positions include 212 to 213 (NK) and Lys238.

This sequence belongs to the eIF-2B alpha/beta/delta subunits family. R15P isomerase subfamily. Homohexamer; trimer of dimers.

The enzyme catalyses alpha-D-ribose 1,5-bisphosphate = D-ribulose 1,5-bisphosphate. Its activity is regulated as follows. Is highly activated in the presence of AMP, with an increase of &gt;40-fold in activity levels. Among other nucleotides, isomerase activity is slightly increased in the presence of GMP, but CMP, UMP, TMP, and NAD(+) have no effect; therefore, AMP is likely the major activator of R15P isomerase in vivo. To a lesser extent, various compounds with an adenosyl moiety, such as dAMP, adenosine, or methylthioadenosine, can also act as activators. The regulation of this enzyme by AMP prevents excess degradation of intracellular AMP by the archaeal AMP degradation pathway. Functionally, catalyzes the isomerization of ribose 1,5-bisphosphate (R15P) to ribulose 1,5-bisphosphate (RuBP), the CO(2) acceptor and substrate for RubisCO. Only accepts the alpha-anomer of D-ribose 1,5-bisphosphate as substrate, being inactive on the beta-anomer. Displays a strict substrate specificity, since other phosphorylated sugars such as R5P, ribose, G16P, G6P, G1P, FBP, F6P, and PRPP, are not substrates. Functions in an archaeal AMP degradation pathway, together with AMP phosphorylase and RubisCO. The chain is Ribose 1,5-bisphosphate isomerase from Thermococcus kodakarensis (strain ATCC BAA-918 / JCM 12380 / KOD1) (Pyrococcus kodakaraensis (strain KOD1)).